The primary structure comprises 327 residues: Cobalamin biosynthesis protein CobD (327 aa).

A run of 4 helical transmembrane segments spans residues 61-78 (MWLT…GLVI), 80-102 (SILP…ILLA), 160-182 (GIVA…YKFI), and 300-322 (AALV…ASLV).

The protein belongs to the CobD/CbiB family.

The protein localises to the cell membrane. It functions in the pathway cofactor biosynthesis; adenosylcobalamin biosynthesis. Its function is as follows. Converts cobyric acid to cobinamide by the addition of aminopropanol on the F carboxylic group. This Brucella melitensis biotype 1 (strain ATCC 23456 / CCUG 17765 / NCTC 10094 / 16M) protein is Cobalamin biosynthesis protein CobD.